A 247-amino-acid chain; its full sequence is ATP synthase subunit a, chloroplastic (247 aa).

The next 5 membrane-spanning stretches (helical) occupy residues 38-58 (QVLITSWVVITILLGSVIIAV), 95-115 (VPFIGTMFLFIFVSNWSGALL), 134-154 (INTTVALALLTSAAYFYAGLS), 199-219 (LVVVVLVSLVPLVVPIPVMFL), and 220-240 (GLFTSGIQALIFATLAAAYIG).

This sequence belongs to the ATPase A chain family. F-type ATPases have 2 components, CF(1) - the catalytic core - and CF(0) - the membrane proton channel. CF(1) has five subunits: alpha(3), beta(3), gamma(1), delta(1), epsilon(1). CF(0) has four main subunits: a, b, b' and c.

The protein resides in the plastid. It localises to the chloroplast thylakoid membrane. Functionally, key component of the proton channel; it plays a direct role in the translocation of protons across the membrane. The chain is ATP synthase subunit a, chloroplastic from Oryza sativa subsp. indica (Rice).